The primary structure comprises 164 residues: Transcription antitermination protein NusB (164 aa).

Belongs to the NusB family.

Functionally, involved in transcription antitermination. Required for transcription of ribosomal RNA (rRNA) genes. Binds specifically to the boxA antiterminator sequence of the ribosomal RNA (rrn) operons. This is Transcription antitermination protein NusB from Chlamydia muridarum (strain MoPn / Nigg).